Reading from the N-terminus, the 139-residue chain is Ribulose bisphosphate carboxylase small subunit (139 aa).

It belongs to the RuBisCO small chain family. Heterohexadecamer of 8 large and 8 small subunits.

The protein localises to the plastid. The protein resides in the chloroplast. Its function is as follows. RuBisCO catalyzes two reactions: the carboxylation of D-ribulose 1,5-bisphosphate, the primary event in carbon dioxide fixation, as well as the oxidative fragmentation of the pentose substrate in the photorespiration process. Both reactions occur simultaneously and in competition at the same active site. Although the small subunit is not catalytic it is essential for maximal activity. This chain is Ribulose bisphosphate carboxylase small subunit, found in Olisthodiscus luteus (Marine phytoflagellate).